Here is a 207-residue protein sequence, read N- to C-terminus: Cytidylate kinase (207 aa).

ATP is bound at residue 7–15 (GVAASGKSS).

Belongs to the cytidylate kinase family. Type 1 subfamily.

It is found in the cytoplasm. The enzyme catalyses CMP + ATP = CDP + ADP. The catalysed reaction is dCMP + ATP = dCDP + ADP. This chain is Cytidylate kinase, found in Deinococcus deserti (strain DSM 17065 / CIP 109153 / LMG 22923 / VCD115).